The chain runs to 229 residues: NAD(P)H-quinone oxidoreductase subunit K, chloroplastic (229 aa).

4 residues coordinate [4Fe-4S] cluster: cysteine 43, cysteine 44, cysteine 108, and cysteine 139.

Belongs to the complex I 20 kDa subunit family. NDH is composed of at least 16 different subunits, 5 of which are encoded in the nucleus. [4Fe-4S] cluster serves as cofactor.

It is found in the plastid. The protein localises to the chloroplast thylakoid membrane. The catalysed reaction is a plastoquinone + NADH + (n+1) H(+)(in) = a plastoquinol + NAD(+) + n H(+)(out). The enzyme catalyses a plastoquinone + NADPH + (n+1) H(+)(in) = a plastoquinol + NADP(+) + n H(+)(out). Functionally, NDH shuttles electrons from NAD(P)H:plastoquinone, via FMN and iron-sulfur (Fe-S) centers, to quinones in the photosynthetic chain and possibly in a chloroplast respiratory chain. The immediate electron acceptor for the enzyme in this species is believed to be plastoquinone. Couples the redox reaction to proton translocation, and thus conserves the redox energy in a proton gradient. This chain is NAD(P)H-quinone oxidoreductase subunit K, chloroplastic, found in Coffea arabica (Arabian coffee).